A 522-amino-acid polypeptide reads, in one-letter code: Ribose import ATP-binding protein RbsA 1 (522 aa).

2 ABC transporter domains span residues 8 to 243 and 249 to 496; these read LRIE…GRSI and RERP…VSTN. 40–47 contacts ATP; the sequence is GENGAGKS. The segment at 492 to 522 is disordered; it reads AVSTNQYKPDKSDKPDASAGKTDQKEAPRGH. Residues 499–522 show a composition bias toward basic and acidic residues; sequence KPDKSDKPDASAGKTDQKEAPRGH.

It belongs to the ABC transporter superfamily. Ribose importer (TC 3.A.1.2.1) family. In terms of assembly, the complex is composed of an ATP-binding protein (RbsA), two transmembrane proteins (RbsC) and a solute-binding protein (RbsB).

Its subcellular location is the cell membrane. The enzyme catalyses D-ribose(out) + ATP + H2O = D-ribose(in) + ADP + phosphate + H(+). Functionally, part of the ABC transporter complex RbsABC involved in ribose import. Responsible for energy coupling to the transport system. The sequence is that of Ribose import ATP-binding protein RbsA 1 from Streptomyces avermitilis (strain ATCC 31267 / DSM 46492 / JCM 5070 / NBRC 14893 / NCIMB 12804 / NRRL 8165 / MA-4680).